The primary structure comprises 341 residues: Biotin synthase (341 aa).

A Radical SAM core domain is found at 53–272 (NHVETASLLS…IAVARIMMPK (220 aa)). [4Fe-4S] cluster contacts are provided by cysteine 68, cysteine 72, and cysteine 75. [2Fe-2S] cluster contacts are provided by cysteine 112, cysteine 143, cysteine 203, and arginine 276.

This sequence belongs to the radical SAM superfamily. Biotin synthase family. In terms of assembly, homodimer. It depends on [4Fe-4S] cluster as a cofactor. [2Fe-2S] cluster serves as cofactor.

The catalysed reaction is (4R,5S)-dethiobiotin + (sulfur carrier)-SH + 2 reduced [2Fe-2S]-[ferredoxin] + 2 S-adenosyl-L-methionine = (sulfur carrier)-H + biotin + 2 5'-deoxyadenosine + 2 L-methionine + 2 oxidized [2Fe-2S]-[ferredoxin]. It functions in the pathway cofactor biosynthesis; biotin biosynthesis; biotin from 7,8-diaminononanoate: step 2/2. Functionally, catalyzes the conversion of dethiobiotin (DTB) to biotin by the insertion of a sulfur atom into dethiobiotin via a radical-based mechanism. This chain is Biotin synthase, found in Nitrobacter winogradskyi (strain ATCC 25391 / DSM 10237 / CIP 104748 / NCIMB 11846 / Nb-255).